We begin with the raw amino-acid sequence, 135 residues long: Ribosome-binding factor A (135 aa).

It belongs to the RbfA family. Monomer. Binds 30S ribosomal subunits, but not 50S ribosomal subunits or 70S ribosomes.

It localises to the cytoplasm. In terms of biological role, one of several proteins that assist in the late maturation steps of the functional core of the 30S ribosomal subunit. Associates with free 30S ribosomal subunits (but not with 30S subunits that are part of 70S ribosomes or polysomes). Required for efficient processing of 16S rRNA. May interact with the 5'-terminal helix region of 16S rRNA. The chain is Ribosome-binding factor A from Aliivibrio salmonicida (strain LFI1238) (Vibrio salmonicida (strain LFI1238)).